The following is a 388-amino-acid chain: Salivary protein Tsal2A (388 aa).

The first 18 residues, 1-18, serve as a signal peptide directing secretion; that stretch reads MSLLYGLLILAFTRSCLV. Asn-260 is a glycosylation site (N-linked (GlcNAc...) asparagine).

This sequence belongs to the DNA/RNA non-specific endonuclease family. A divalent metal cation serves as cofactor. As to expression, saliva (at protein level).

The protein localises to the secreted. Functionally, binds double-stranded DNA (dsDNA) with high affinity. Binds double-stranded RNA. Binds single-stranded DNA with lower affinity and with a preference for purine-rich sequences. Shows residual nuclease activity for dsDNA. Facilitates blood meal intake by lowering the local viscosity created by the release of host DNA. This Glossina morsitans morsitans (Savannah tsetse fly) protein is Salivary protein Tsal2A.